The primary structure comprises 358 residues: Methylthioribose-1-phosphate isomerase (358 aa).

Residues 54-56 (RGA), Arg-96, and Gln-205 contribute to the substrate site. Asp-246 acts as the Proton donor in catalysis. A substrate-binding site is contributed by 256 to 257 (SK).

The protein belongs to the eIF-2B alpha/beta/delta subunits family. MtnA subfamily.

It catalyses the reaction 5-(methylsulfanyl)-alpha-D-ribose 1-phosphate = 5-(methylsulfanyl)-D-ribulose 1-phosphate. Its pathway is amino-acid biosynthesis; L-methionine biosynthesis via salvage pathway; L-methionine from S-methyl-5-thio-alpha-D-ribose 1-phosphate: step 1/6. Catalyzes the interconversion of methylthioribose-1-phosphate (MTR-1-P) into methylthioribulose-1-phosphate (MTRu-1-P). The protein is Methylthioribose-1-phosphate isomerase of Pseudomonas putida (strain GB-1).